A 309-amino-acid chain; its full sequence is Large ribosomal subunit protein mL45 (309 aa).

This sequence belongs to the mitochondrion-specific ribosomal protein mL45 family. In terms of assembly, component of the mitochondrial ribosome large subunit (39S) which comprises a 16S rRNA and about 50 distinct proteins.

It is found in the mitochondrion. Functionally, component of the mitochondrial large ribosomal subunit (mt-LSU). Within the mitochondrial ribosomes, required to direct the nascent polypeptide toward the tunnel exit and position the exit at a distance from the membrane surface. This chain is Large ribosomal subunit protein mL45 (mrpl45), found in Xenopus tropicalis (Western clawed frog).